The sequence spans 680 residues: Probable galacturonosyltransferase 3 (680 aa).

The Cytoplasmic segment spans residues 1–6 (MTTFST). The chain crosses the membrane as a helical; Signal-anchor for type II membrane protein span at residues 7-27 (CAAFLSLVVVLHAVHVGGAIL). At 28–680 (ESQAPHRELK…PYLRRCDINE (653 aa)) the chain is on the lumenal side. Residues 118-146 (SFQNDTGMEDNASHSTTNQTDESENQFPN) form a disordered region. 10 N-linked (GlcNAc...) asparagine glycosylation sites follow: Asn121, Asn128, Asn135, Asn239, Asn386, Asn438, Asn545, Asn578, Asn610, and Asn631. Polar residues predominate over residues 130–145 (SHSTTNQTDESENQFP).

This sequence belongs to the glycosyltransferase 8 family. As to expression, expressed in roots, inflorescences, siliques, leaves and stems.

It is found in the golgi apparatus membrane. The protein operates within glycan metabolism; pectin biosynthesis. In terms of biological role, may be involved in pectin and/or xylans biosynthesis in cell walls. This is Probable galacturonosyltransferase 3 (GAUT3) from Arabidopsis thaliana (Mouse-ear cress).